A 1385-amino-acid chain; its full sequence is PsbD mRNA maturation factor Nac2, chloroplastic (1385 aa).

The N-terminal 45 residues, 1–45 (MGALPCPAHIEHHQGLSSFGTRRVLRQSVACGAHRSRRRSLWAGA), are a transit peptide targeting the chloroplast. A compositionally biased stretch (low complexity) spans 132–152 (GPHGAASATGAGSHSSSAGAP). Disordered stretches follow at residues 132 to 157 (GPHGAASATGAGSHSSSAGAPTPTPR), 263 to 282 (AVAAAAGRQPHEHQQERSSA), 304 to 360 (TSSR…AAGP), 387 to 502 (RQQP…GHGQ), 546 to 568 (NGAGMSDPASASSTSTSSNSGTS), 726 to 756 (HADSSSSNGNGSGSSSSSGLPQVSEEEVAAA), and 840 to 899 (ARRA…APSA). The segment covering 271–281 (QPHEHQQERSS) has biased composition (basic and acidic residues). Residues 304 to 313 (TSSRRGGRSS) are compositionally biased toward low complexity. Gly residues predominate over residues 403–412 (NGSGKSGSGG). Low complexity-rich tracts occupy residues 448 to 464 (APAAKRSAAGKASRPAA), 554 to 568 (ASASSTSTSSNSGTS), 729 to 744 (SSSSNGNGSGSSSSSG), and 854 to 893 (ASTTASMDGDDGALSVADGSSSADAAIDPASGASPSAAAG). TPR repeat units lie at residues 851-884 (RRGASTTASMDGDDGALSVADGSSSADAAIDPAS), 951-984 (GAVMHYWGSRELEAGNVRNARIVAAEALRKCPAD), 985-1018 (VALYVLAASVELEASNLELAKGYCQRAYALDRTD), 1019-1052 (KQLFLIWPRVEAGLGDRDKARLLFERALDAHPLN), 1053-1086 (TKIINMYARFEAEEGSYREAAELYDRALQIDPLS), 1091-1124 (VHNRADWASMETDLGNTGLARQLLEEGLEAHPNS), 1125-1158 (AALLVVYSKLQRLEGRYQEALAAVRRAQAVAGAF), 1160-1193 (AAVMNERAQVLRALGERELAANLSRHVSAVKQLN), and 1205-1238 (AWRAFVEATRTPEQRTLVAAARAHRLQLGWAPAV). Disordered regions lie at residues 1237 to 1257 (AVRGAKPGPPPGVVAGDGRRP) and 1333 to 1385 (IQDP…ADDM). The segment covering 1356 to 1365 (QDADYYEEPE) has biased composition (acidic residues). Over residues 1374–1385 (AVRRPMPDADDM) the composition is skewed to basic and acidic residues.

As to quaternary structure, part of 2 complexes of about 600 and less than 2000 kDa, both of which also contain non-polysomal RNA.

It localises to the plastid. The protein localises to the chloroplast stroma. Functionally, involved, directly or indirectly, in the processing of the chloroplast encoded psbD mRNA to its mature form, acting via the 5'-UTR of the psbD mRNA. The last 588 amino acids of the protein are sufficient to confer stability on the transcript in vivo. This is PsbD mRNA maturation factor Nac2, chloroplastic (NAC2) from Chlamydomonas reinhardtii (Chlamydomonas smithii).